A 29-amino-acid chain; its full sequence is Vodo peptide N (29 aa).

The cyclopeptide (Gly-Asn) cross-link spans 1–29; it reads GLPVCGETCTLGKCYTAGCSCSWPVCYRN. Disulfide bonds link Cys5/Cys19, Cys9/Cys21, and Cys14/Cys26.

This is a cyclic peptide.

Probably participates in a plant defense mechanism. The sequence is that of Vodo peptide N from Viola odorata (Sweet violet).